A 299-amino-acid chain; its full sequence is ATP phosphoribosyltransferase (299 aa).

Belongs to the ATP phosphoribosyltransferase family. Long subfamily. Requires Mg(2+) as cofactor.

The protein localises to the cytoplasm. It catalyses the reaction 1-(5-phospho-beta-D-ribosyl)-ATP + diphosphate = 5-phospho-alpha-D-ribose 1-diphosphate + ATP. Its pathway is amino-acid biosynthesis; L-histidine biosynthesis; L-histidine from 5-phospho-alpha-D-ribose 1-diphosphate: step 1/9. Its activity is regulated as follows. Feedback inhibited by histidine. Its function is as follows. Catalyzes the condensation of ATP and 5-phosphoribose 1-diphosphate to form N'-(5'-phosphoribosyl)-ATP (PR-ATP). Has a crucial role in the pathway because the rate of histidine biosynthesis seems to be controlled primarily by regulation of HisG enzymatic activity. This chain is ATP phosphoribosyltransferase, found in Shewanella loihica (strain ATCC BAA-1088 / PV-4).